Reading from the N-terminus, the 257-residue chain is Myosin-8 (257 aa).

Residues 1–257 (RAALQAEIEE…REVHTKISAE (257 aa)) adopt a coiled-coil conformation. A phosphoserine mark is found at S33, S45, and S58.

In terms of assembly, muscle myosin is a hexameric protein that consists of 2 heavy chain subunits (MHC), 2 alkali light chain subunits (MLC) and 2 regulatory light chain subunits (MLC-2).

It localises to the cytoplasm. It is found in the myofibril. Muscle contraction. The sequence is that of Myosin-8 (Myh8) from Rattus norvegicus (Rat).